Here is a 417-residue protein sequence, read N- to C-terminus: Serine hydroxymethyltransferase 1 (417 aa).

(6S)-5,6,7,8-tetrahydrofolate-binding positions include Leu121 and 125–127; that span reads GHL. Residue Lys230 is modified to N6-(pyridoxal phosphate)lysine. 355-357 contributes to the (6S)-5,6,7,8-tetrahydrofolate binding site; it reads SPF.

Belongs to the SHMT family. In terms of assembly, homodimer. Pyridoxal 5'-phosphate is required as a cofactor.

The protein localises to the cytoplasm. It carries out the reaction (6R)-5,10-methylene-5,6,7,8-tetrahydrofolate + glycine + H2O = (6S)-5,6,7,8-tetrahydrofolate + L-serine. The protein operates within one-carbon metabolism; tetrahydrofolate interconversion. It participates in amino-acid biosynthesis; glycine biosynthesis; glycine from L-serine: step 1/1. Functionally, catalyzes the reversible interconversion of serine and glycine with tetrahydrofolate (THF) serving as the one-carbon carrier. This reaction serves as the major source of one-carbon groups required for the biosynthesis of purines, thymidylate, methionine, and other important biomolecules. Also exhibits THF-independent aldolase activity toward beta-hydroxyamino acids, producing glycine and aldehydes, via a retro-aldol mechanism. The polypeptide is Serine hydroxymethyltransferase 1 (Pseudomonas aeruginosa (strain ATCC 15692 / DSM 22644 / CIP 104116 / JCM 14847 / LMG 12228 / 1C / PRS 101 / PAO1)).